The sequence spans 391 residues: DNA repair protein NreA (391 aa).

Residues 6–20 form a C4-type zinc finger; it reads CAECKGKLLCGRSKC. The PIP motif signature appears at 382–389; it reads QTSLASFF.

Belongs to the Nre family. In terms of assembly, interacts with the DNA polymerase sliding clamp (PCNA) via the PIP (PCNA-interacting peptide) motif.

In terms of biological role, involved in DNA damage repair. In Archaeoglobus fulgidus (strain ATCC 49558 / DSM 4304 / JCM 9628 / NBRC 100126 / VC-16), this protein is DNA repair protein NreA.